Reading from the N-terminus, the 1399-residue chain is MNQEIMNLFNPTTPAQVFDQIRISIASPEKILSWSYGEIKKPETINYRTFKPERDGLFCARIFGPIKDYECLCGKYKRMKYKGIICEKCSVEVTLSRVRRERMGHIELAAPVAHIWFLKSLPSRIGLLLDMTLKDLERILYFEYYVVLEPGLTALKDRQLLSEDEYLKAQDEYGQDSFTAMIGAEAIRELLRGLELEKLEQTLRAEMQETDSDIKHKKLAKRLKIVEAFRHSGNKPEWMIMTVVPVIPPDLRPLVPLDGGRFATSDLNDLYRRVINRNNRLKRLMELRAPDIIIRNEKRMLQEAVDALFDNGRRGRVITGANKRPLKSLADMLKGKQGRFRQNLLGKRVDYSGRSVIVVGPELRLHQCGLPKKMALELFKPFIYSRLDAKGLSTTVKQAKKLVEKERPEVWDILDEVIREHPVLLNRAPTLHRLGIQAFEPVLIEGKAIQLHPLVCSAFNADFDGDQMAVHVPLSLEAQLEARVLMMSTNNILHPANGQPIIVPSQDIVLGLYYLSIMREGMNGQGMTFGNMAELEHALHAKAIHLHSKIKYRWEGMDETGKISKRWIETTAGRVMLGNVLPRHPRISYEIINKLMTKREISGVIDQVYRHCGQKETVIFCDRIMALGFYNAFKAGISFGKDDMVVPAGKWKIVDTTRTLAKDFEQQYNDGLITHGEKYNKVVDAWSKASEEIAKEMMKEISVTKKTATGADADINSIYMMSHSGARGSPAQMRQLAGMRGLMAKPSGEIIETPIISNFKEGLSVLEYFNSTHGARKGLADTALKTANSGYLTRRLVDVAQDCIITQDDCGTHLGIKMRAIVDAGTVVASLGSRILGRVPCDDVRDPATNAVLVKAGTLMEESHIDAIQQAGVQEVKIRSALTCELVNGICKMCYGRDLARGTPVNHGEAVGVIAAQSIGEPGTQLTMRTFHIGGAAQLNEQSFVESNFEGRVVIKNKAIARNSEGHLIAMVRNMVVTIVDPDGSERATHRIQYGARMHVDDGDMIKRGQRIAEWDPYTRPILTEAEGTIGFEDLTEGLSISETLDESTGIAKRVVIDWRGTRGGADLRPAIVIKGKDGKVLKLARGGDARYMLSVDAILSVDVGTTVKPGDILARISTESAKTRDITGGLPRVAELFEARKPKDAAIIAEIAGTIRFGRDYKNKRRISIEPVDKTEEPREYLIPKGKHIHLQDGDIVEKGDFIVEGNPAPHDILAIKGIEELAAYLVNEIQEVYRLQGVLINDKHIEVIVRQMLQKIEVTDQGDTDMIAGEQVDKIEFDALNAKAVEEGKKPATGNPVLLGITKASLQTRSFFSAASFQETTRVLTEAAVNGKIDPLEGLKENVIVGRLIPAGTGASMARIREVALKRDKLILDEREKQAAIVPSQPEPQPLALPPAE.

Zn(2+)-binding residues include C71, C73, C86, and C89. The Mg(2+) site is built by D462, D464, and D466. Zn(2+) contacts are provided by C810, C884, C891, and C894. The interval 1379–1399 (KQAAIVPSQPEPQPLALPPAE) is disordered. A compositionally biased stretch (pro residues) spans 1387 to 1399 (QPEPQPLALPPAE).

It belongs to the RNA polymerase beta' chain family. As to quaternary structure, the RNAP catalytic core consists of 2 alpha, 1 beta, 1 beta' and 1 omega subunit. When a sigma factor is associated with the core the holoenzyme is formed, which can initiate transcription. It depends on Mg(2+) as a cofactor. Requires Zn(2+) as cofactor.

It catalyses the reaction RNA(n) + a ribonucleoside 5'-triphosphate = RNA(n+1) + diphosphate. Its function is as follows. DNA-dependent RNA polymerase catalyzes the transcription of DNA into RNA using the four ribonucleoside triphosphates as substrates. The sequence is that of DNA-directed RNA polymerase subunit beta' from Bradyrhizobium sp. (strain BTAi1 / ATCC BAA-1182).